A 252-amino-acid chain; its full sequence is Probable transcriptional regulatory protein Haur_3030 (252 aa).

Belongs to the TACO1 family.

It localises to the cytoplasm. The sequence is that of Probable transcriptional regulatory protein Haur_3030 from Herpetosiphon aurantiacus (strain ATCC 23779 / DSM 785 / 114-95).